The primary structure comprises 331 residues: PDZ and LIM domain protein 4 (331 aa).

Residues 1 to 84 (MPHSVTLRGP…HLTLSVSRPE (84 aa)) enclose the PDZ domain. 3 disordered regions span residues 80-99 (VSRP…KAQA), 105-152 (DSEA…GSNS), and 221-243 (AGEG…ASKL). Residues Ser112, Ser116, Ser120, and Ser135 each carry the phosphoserine modification. Residues 254 to 313 (PECTRCGHGIVGTIVKARDKLYHPECFMCSDCGLNLKQRGYFFLDERLYCESHAKARVKP) form the LIM zinc-binding domain.

As to quaternary structure, homodimer. Interacts (via C-terminus only or via combined C-terminus and LIM domain, but not LIM domain only) with PTPN13 (via the second or fourth PDZ domains). Found in a complex with PTPN13 and TRIP6. Interacts (via PDZ domain) with ACTN1 and ACTN2 (via C-terminal SDL residues). Interacts (via PDZ domain) with TRIP6 (via the second LIM domain or via the third LIM domain plus C-terminus). Interacts (via LIM domain) with GRIA1 (via C-terminus); this interaction as well as the interaction with alpha-actinin is required for their colocalization in early endosomes. Interacts with PDLIM1. Forms (via LIM domain) a heterodimer with PDLIM3. Interacts directly with SRC (via kinase domain and to a lesser extent the SH2 domain). Phosphorylated on tyrosine residue(s). Can be dephosphorylated by PTPN13.

The protein resides in the cytoplasm. It localises to the cytoskeleton. Its subcellular location is the cell projection. The protein localises to the dendritic spine. It is found in the early endosome membrane. The protein resides in the recycling endosome membrane. It localises to the nucleus. Its subcellular location is the perinuclear region. The protein localises to the lamellipodium. It is found in the synapse. The protein resides in the synaptosome. Functionally, suppresses SRC activation by recognizing and binding to active SRC and facilitating PTPN13-mediated dephosphorylation of SRC 'Tyr-419' leading to its inactivation. Inactivated SRC dissociates from this protein allowing the initiation of a new SRC inactivation cycle. Involved in reorganization of the actin cytoskeleton. In nonmuscle cells, binds to ACTN1 (alpha-actinin-1), increases the affinity of ACTN1 to F-actin (filamentous actin), and promotes formation of actin stress fibers. Involved in regulation of the synaptic AMPA receptor transport in dendritic spines of hippocampal pyramidal neurons directing the receptors toward an insertion at the postsynaptic membrane. Links endosomal surface-internalized GRIA1-containing AMPA receptors to the alpha-actinin/actin cytoskeleton. Increases AMPA receptor-mediated excitatory postsynaptic currents in neurons. The sequence is that of PDZ and LIM domain protein 4 (PDLIM4) from Bos taurus (Bovine).